Consider the following 247-residue polypeptide: 14-3-3 protein gamma (247 aa).

Belongs to the 14-3-3 family. Homodimer, and heterodimer with other family members.

The protein localises to the cytoplasm. Its function is as follows. Adapter protein implicated in the regulation of a large spectrum of both general and specialized signaling pathways. Binds to a large number of partners, usually by recognition of a phosphoserine or phosphothreonine motif. Binding generally results in the modulation of the activity of the binding partner. In Gallus gallus (Chicken), this protein is 14-3-3 protein gamma (YWHAG).